The primary structure comprises 834 residues: ATP-dependent RNA helicase ddx23 (834 aa).

Disordered stretches follow at residues 1–245 and 322–371; these read MDPP…TQFS and FGGY…GKQI. Positions 10-25 are enriched in basic and acidic residues; sequence SKRDTKKKDEVNKEQP. The span at 42 to 54 shows a compositional bias: polar residues; that stretch reads SNPTQEEPTNTLQ. Basic and acidic residues-rich tracts occupy residues 70–110, 117–164, 171–205, and 231–245; these read GLKE…DYRD, GRDR…RRDG, RRRD…RDND, and DIHK…TQFS. Residues 328–362 are compositionally biased toward low complexity; that stretch reads NNNNNGNHYNGNIYNNNNNNNNNNNNNNNINNNNN. The Q motif signature appears at 413–441; sequence RTWQESNLPREILEAIRQLGYEKPSPIQM. A Helicase ATP-binding domain is found at 444-643; the sequence is IPISLTGRDI…KKYLRRPCTI (200 aa). An ATP-binding site is contributed by 457–464; that stretch reads AETGSGKT. Residues 570–573 carry the DEAD box motif; that stretch reads DEAD. The Helicase C-terminal domain occupies 654–815; the sequence is RIRQTVIFVK…IVPIELLKHP (162 aa). A disordered region spans residues 813–834; that stretch reads KHPSSQQKHGSSKDHNKSVIFK. A compositionally biased stretch (basic and acidic residues) spans 823–834; the sequence is SSKDHNKSVIFK.

The protein belongs to the DEAD box helicase family. DDX23/PRP28 subfamily.

It localises to the cytoplasm. Its subcellular location is the nucleus. It carries out the reaction ATP + H2O = ADP + phosphate + H(+). Probable ATP-dependent RNA helicase which may be involved in mRNA splicing. In Dictyostelium discoideum (Social amoeba), this protein is ATP-dependent RNA helicase ddx23 (helB2).